The following is a 207-amino-acid chain: MSTPSIHCLKPSPLHLPSGIPGSPGRQRRHTLPANEFRCLTPKDAAGVFEIEREAFISVSGNCPLNLDEVRHFLTLCPELSLGWFVEGRLVAFIIGSLWDEERLTQESLTLHRPGGRTAHLHALAVHHSFRQQGKGSVLLWRYLQHAGGQPAVRRAVLMCEDALVPFYQRFGFHPAGPCAVVVGSLTFTEMHCSLRGHAALRRNSDR.

The residue at position 31 (Thr-31) is a Phosphothreonine; by PKA. An N-acetyltransferase domain is found at 35 to 196 (NEFRCLTPKD…TFTEMHCSLR (162 aa)). Leu-124 contacts substrate. Acetyl-CoA is bound by residues 124 to 126 (LAV) and 132 to 137 (QQGKGS). Met-159 contacts substrate. 168–170 (YQR) is an acetyl-CoA binding site. Ser-205 bears the Phosphoserine mark.

Belongs to the acetyltransferase family. AANAT subfamily. Monomer. Interacts with several 14-3-3 proteins, including YWHAB, YWHAE, YWHAG and YWHAZ, preferentially when phosphorylated at Thr-31. Phosphorylation on Ser-205 also allows binding to YWHAZ, but with lower affinity. The interaction with YWHAZ considerably increases affinity for arylalkylamines and acetyl-CoA and protects the enzyme from dephosphorylation and proteasomal degradation. It may also prevent thiol-dependent inactivation. Post-translationally, cAMP-dependent phosphorylation on both N-terminal Thr-31 and C-terminal Ser-205 regulates AANAT activity by promoting interaction with 14-3-3 proteins. In terms of tissue distribution, high levels in pineal gland and retina.

The protein localises to the cytoplasm. It carries out the reaction a 2-arylethylamine + acetyl-CoA = an N-acetyl-2-arylethylamine + CoA + H(+). Its pathway is aromatic compound metabolism; melatonin biosynthesis; melatonin from serotonin: step 1/2. Controls the night/day rhythm of melatonin production in the pineal gland. Catalyzes the N-acetylation of serotonin into N-acetylserotonin, the penultimate step in the synthesis of melatonin. This is Serotonin N-acetyltransferase (AANAT) from Bos taurus (Bovine).